Reading from the N-terminus, the 98-residue chain is NADH-ubiquinone oxidoreductase chain 4L (98 aa).

3 consecutive transmembrane segments (helical) span residues 1-21, 29-49, and 61-81; these read MSLV…GLLM, ALLC…LTIL, and IILL…LVTI.

The protein belongs to the complex I subunit 4L family. As to quaternary structure, core subunit of respiratory chain NADH dehydrogenase (Complex I) which is composed of 45 different subunits.

It is found in the mitochondrion inner membrane. It carries out the reaction a ubiquinone + NADH + 5 H(+)(in) = a ubiquinol + NAD(+) + 4 H(+)(out). Functionally, core subunit of the mitochondrial membrane respiratory chain NADH dehydrogenase (Complex I) which catalyzes electron transfer from NADH through the respiratory chain, using ubiquinone as an electron acceptor. Part of the enzyme membrane arm which is embedded in the lipid bilayer and involved in proton translocation. The polypeptide is NADH-ubiquinone oxidoreductase chain 4L (MT-ND4L) (Ziphius cavirostris (Cuvier's beaked whale)).